A 703-amino-acid chain; its full sequence is MDLSLHVALCLGMLALCLAMPPKEKQVRWCAKSKSEFSKCRDLVNTCKNKEITLSCVEKSSTDECLTAIQNDRADAICVDGGDVYKGSLQPYNLKPIMAENYGSHTEPDTCYYAVAVVKKSSTFTFDELRDKRSCHTGIGKTAGWNVIIGLLLEKQLLKWEGPDTESLEKAVSKFFKASCVPGAKEPKLCQQCAGKKEHKCARSNNEPYYNYAGAFKCLQDDKGDVAFVKHSTVPEELHKDYELLCPDNTRKPISDYKNCNLAKVPAHSVLARARDDKSKDIIAFLQEAQKTKECKLFSSQHGKDLLFKDTAVSLVPLPPTIDGFLFLGAVYYQEIHALKEGVKEDDLAAPSKVRWCTQSKAEKTKCDDWTTISGGSIECTEAATAEDCILQILKGDADAVTLDGGYMYTAGQCGLVPVMGEYYDLDDLTPCQRRSSQAKGVYYAVAIAKKGTKVSWKNLRGVKTCHTAVGRTAGWNIPVGLITNETNNCDFASYVGESCAPGSDVKSNLCKLCIGDPAKPLDSAKKCSPSASEAYHGYSGAFRCLVEKGDVCFAKHTTVFENTDGKNPAAWAKDLKSDDYELLCPDGSRAPINDFKRCNLAEVPAHSVVTLPGKRKPVVEILVNQQSLYGRKGFQKDIFQMFQSKDGKDLLFKDSTQCLLEISEKTTMQEFLGDKYYTAVTSLNKCSNTKSGLLSSCTFHSC.

The first 19 residues, 1 to 19, serve as a signal peptide directing secretion; the sequence is MDLSLHVALCLGMLALCLA. Transferrin-like domains lie at 27–341 and 354–686; these read VRWC…ALKE and VRWC…SLNK. 2 disulfide bridges follow: cysteine 30/cysteine 65 and cysteine 40/cysteine 56. Fe(3+) is bound by residues aspartate 80 and tyrosine 112. 3 cysteine pairs are disulfide-bonded: cysteine 135-cysteine 218, cysteine 180-cysteine 193, and cysteine 246-cysteine 260. The hydrogencarbonate site is built by threonine 137, lysine 141, alanine 143, and glycine 144. Tyrosine 212 is a Fe(3+) binding site. Histidine 268 contacts Fe(3+). The interval 341-350 is connecting region; it reads EGVKEDDLAA. 2 disulfide bridges follow: cysteine 357–cysteine 389 and cysteine 367–cysteine 380. 2 residues coordinate Fe(3+): aspartate 404 and tyrosine 443. 7 disulfides stabilise this stretch: cysteine 414/cysteine 698, cysteine 432/cysteine 659, cysteine 466/cysteine 545, cysteine 490/cysteine 687, cysteine 500/cysteine 514, cysteine 511/cysteine 528, and cysteine 585/cysteine 599. Hydrogencarbonate-binding residues include threonine 468, arginine 472, alanine 474, and glycine 475. Residue tyrosine 539 participates in Fe(3+) binding. Residue histidine 607 participates in Fe(3+) binding.

The protein belongs to the transferrin family. As to quaternary structure, monomer. As to expression, plasma.

The protein localises to the secreted. Transferrins are iron binding transport proteins which can bind two Fe(3+) ions in association with the binding of an anion, usually bicarbonate. It is responsible for the transport of iron from sites of absorption and heme degradation to those of storage and utilization. Serum transferrin may also have a further role in stimulating cell proliferation. The polypeptide is Serotransferrin (tf) (Xenopus tropicalis (Western clawed frog)).